The following is a 72-amino-acid chain: Conotoxin Gla(2)-TxVI/B (72 aa).

Positions M1 to A19 are cleaved as a signal peptide. Positions L20–R44 are excised as a propeptide. Cystine bridges form between C48/C62, C55/C66, and C61/C70. E56 is modified (4-carboxyglutamate). A 4-hydroxyproline modification is found at P58. Serine amide is present on S71.

In terms of processing, brominated at one of the Trp residues. Expressed by the venom duct.

It localises to the secreted. The polypeptide is Conotoxin Gla(2)-TxVI/B (Conus textile (Cloth-of-gold cone)).